The following is a 427-amino-acid chain: GTPase ERA-like, chloroplastic (427 aa).

The N-terminal 39 residues, Met1–Thr39, are a transit peptide targeting the chloroplast. The 171-residue stretch at Arg128–Phe298 folds into the Era-type G domain. The interval Gly136–Ser143 is G1. Gly136 to Ser143 provides a ligand contact to GTP. The interval Gln162–His166 is G2. The G3 stretch occupies residues Asp183–Gly186. Residues Asp183–Val187 and Asn248–Asp251 contribute to the GTP site. The segment at Asn248 to Asp251 is G4. A G5 region spans residues Val277 to Ala279. The 78-residue stretch at Tyr329–Glu406 folds into the KH type-2 domain.

The protein belongs to the TRAFAC class TrmE-Era-EngA-EngB-Septin-like GTPase superfamily. Era GTPase family.

The protein localises to the plastid. It localises to the chloroplast stroma. The protein resides in the chloroplast nucleoid. Nuclear genome-encoded probable GTPase involved in ribosome biogenesis in chloroplasts. Plays a role in 16S rRNA maturation in plastids and may contribute to the assembly of the small (30S) ribosomal subunit. This is GTPase ERA-like, chloroplastic from Arabidopsis thaliana (Mouse-ear cress).